A 1189-amino-acid polypeptide reads, in one-letter code: Origin recognition complex subunit 1 (1189 aa).

The required for peripherial nuclear localization stretch occupies residues 1–53; sequence MTPKKKIFQNFQANDNEILSPTKKGIKLNVSKLNILNFENTIITKEKTNYEYK. The residue at position 2 (Thr2) is a Phosphothreonine. Position 20 is a phosphoserine (Ser20). Leucine heptad repeat repeat units lie at residues 137–143, 144–150, 151–157, and 158–164; these read LTNISSS and LSNSLDE. Positions 239–248 are enriched in basic residues; sequence KKNISKKNTH. Disordered stretches follow at residues 239–421 and 679–749; these read KKNI…DHTD and DTQA…QSSL. Over residues 254 to 279 the composition is skewed to basic and acidic residues; that stretch reads QNDKNKEKNKEKDKNIKKDRDKDIQT. Positions 304–320 are enriched in low complexity; sequence NNDNVKNNLKNNINNNN. A compositionally biased stretch (polar residues) spans 321 to 339; that stretch reads TLKRSSQSVRIDSDLSSAH. Residues 353–381 show a composition bias toward low complexity; that stretch reads HRNNNNNNNNNNKTTSNNHNKNNKINNNN. The span at 385–394 shows a compositional bias: basic and acidic residues; that stretch reads NYKKQTDTKH. The segment covering 395–411 has biased composition (low complexity); the sequence is TNNTQNNKYNKTKTTNT. The segment covering 695 to 709 has biased composition (polar residues); it reads KAQTTTNVKANTHTK. Composition is skewed to basic and acidic residues over residues 710–724 and 733–742; these read TLND…KNKE and DVKKKSDPHN. ATP-binding positions include Val780 and 815 to 823; that span reads GMPGTGKTA. The Mg(2+) site is built by Asp903 and Glu904. Glu904 lines the ATP pocket. A PIP-box motif is present at residues 913–922; it reads QKVLFTLFDW. 2 residues coordinate ATP: Asn937 and Arg1003.

Belongs to the ORC1 family. In terms of assembly, component of the origin recognition complex (ORC). Interacts (via PIP-box) with PCNA1; the interaction occurs during DNA replication in trophozoites. Post-translationally, in schizonts, may be phosphorylated by PK5; phosphorylation leads to ORC1 dissociation from the telomeres and var gene promoters, translocation to the cytoplasm, where it is degraded by the proteasome.

It localises to the nucleus. The protein localises to the chromosome. It is found in the telomere. The protein resides in the nucleolus. It carries out the reaction ATP + H2O = ADP + phosphate + H(+). Component of the origin recognition complex (ORC) that binds origins of replication and thus may regulate the initiation of DNA replication. DNA-binding may not be ATP-dependent. In a SIR2A/Sir2-dependent manner, binds to and silences telomers and subtelomeric repeat regions (TAREs). In a SIR2A/Sir2-dependent manner, binds to promoters of var genes localized next to TAREs resulting in their silencing. This chain is Origin recognition complex subunit 1, found in Plasmodium falciparum (isolate 3D7).